A 597-amino-acid chain; its full sequence is Aspartate--tRNA(Asp/Asn) ligase (597 aa).

Glu-175 is a binding site for L-aspartate. The segment at 199–202 (QQYK) is aspartate. Arg-221 and His-454 together coordinate L-aspartate. 221–223 (RDE) lines the ATP pocket. Glu-488 lines the ATP pocket. Arg-495 contacts L-aspartate. Position 540–543 (540–543 (GVDR)) interacts with ATP.

Belongs to the class-II aminoacyl-tRNA synthetase family. Type 1 subfamily. In terms of assembly, homodimer.

The protein localises to the cytoplasm. The enzyme catalyses tRNA(Asx) + L-aspartate + ATP = L-aspartyl-tRNA(Asx) + AMP + diphosphate. In terms of biological role, aspartyl-tRNA synthetase with relaxed tRNA specificity since it is able to aspartylate not only its cognate tRNA(Asp) but also tRNA(Asn). Reaction proceeds in two steps: L-aspartate is first activated by ATP to form Asp-AMP and then transferred to the acceptor end of tRNA(Asp/Asn). The chain is Aspartate--tRNA(Asp/Asn) ligase from Bartonella quintana (strain Toulouse) (Rochalimaea quintana).